The following is a 980-amino-acid chain: MDYCSLLVVSFLITVMTVLASKENDHELIKNPQNSLSSWISSSSSSSSMLVDVCNWSGVKCNKESTQVIELDISGRDLGGEISPSIANLTGLTVLDLSRNFFVGKIPPEIGSLHETLKQLSLSENLLHGNIPQELGLLNRLVYLDLGSNRLNGSIPVQLFCNGSSSSLQYIDLSNNSLTGEIPLNYHCHLKELRFLLLWSNKLTGTVPSSLSNSTNLKWMDLESNMLSGELPSQVISKMPQLQFLYLSYNHFVSHNNNTNLEPFFASLANSSDLQELELAGNSLGGEITSSVRHLSVNLVQIHLDQNRIHGSIPPEISNLLNLTLLNLSSNLLSGPIPRELCKLSKLERVYLSNNHLTGEIPMELGDIPRLGLLDVSRNNLSGSIPDSFGNLSQLRRLLLYGNHLSGTVPQSLGKCINLEILDLSHNNLTGTIPVEVVSNLRNLKLYLNLSSNHLSGPIPLELSKMDMVLSVDLSSNELSGKIPPQLGSCIALEHLNLSRNGFSSTLPSSLGQLPYLKELDVSFNRLTGAIPPSFQQSSTLKHLNFSFNLLSGNVSDKGSFSKLTIESFLGDSLLCGSIKGMQACKKKHKYPSVLLPVLLSLIATPVLCVFGYPLVQRSRFGKNLTVYAKEEVEDEEKQNQNDPKYPRISYQQLIAATGGFNASSLIGSGRFGHVYKGVLRNNTKVAVKVLDPKTALEFSGSFKRECQILKRTRHRNLIRIITTCSKPGFNALVLPLMPNGSLERHLYPGEYSSKNLDLIQLVNICSDVAEGIAYLHHYSPVKVVHCDLKPSNILLDDEMTALVTDFGISRLVQGVEETVSTDDSVSFGSTDGLLCGSVGYIAPEYGMGKRASTHGDVYSFGVLLLEIVSGRRPTDVLVNEGSSLHEFMKSHYPDSLEGIIEQALSRWKPQGKPEKCEKLWREVILEMIELGLVCTQYNPSTRPDMLDVAHEMGRLKEYLFACPSLLHFSSQETQGEASS.

The N-terminal stretch at 1-20 (MDYCSLLVVSFLITVMTVLA) is a signal peptide. The Extracellular segment spans residues 21–593 (SKENDHELIK…ACKKKHKYPS (573 aa)). N-linked (GlcNAc...) asparagine glycans are attached at residues Asn55 and Asn88. LRR repeat units follow at residues 65–89 (STQV…IANL), 90–113 (TGLT…IGSL), 115–138 (ETLK…LGLL), 139–162 (NRLV…LFCN), 165–189 (SSSL…YHCH), 191–214 (KELR…LSNS), 215–238 (TNLK…VISK), and 240–263 (PQLQ…NLEP). N-linked (GlcNAc...) asparagine glycans are attached at residues Asn152, Asn162, Asn175, and Asn213. Residues Asn257 and Asn270 are each glycosylated (N-linked (GlcNAc...) asparagine). LRR repeat units follow at residues 271–295 (SSDL…VRHL), 296–320 (SVNL…ISNL), 322–344 (NLTL…LCKL), 345–370 (SKLE…DIPR), 372–391 (GLLD…SFGN), 392–416 (LSQL…LGKC), 417–440 (INLE…VVSN), 442–463 (RNLK…PLEL), 464–490 (SKMD…LGSC), 491–514 (IALE…LGQL), 515–537 (PYLK…SFQQ), and 539–563 (STLK…SFSK). N-linked (GlcNAc...) asparagine glycans are attached at residues Asn322 and Asn327. N-linked (GlcNAc...) asparagine glycans are attached at residues Asn380 and Asn391. N-linked (GlcNAc...) asparagine glycosylation is found at Asn428 and Asn449. The N-linked (GlcNAc...) asparagine glycan is linked to Asn497. N-linked (GlcNAc...) asparagine glycans are attached at residues Asn545 and Asn554. The chain crosses the membrane as a helical span at residues 594–614 (VLLPVLLSLIATPVLCVFGYP). Over 615–980 (LVQRSRFGKN…SQETQGEASS (366 aa)) the chain is Cytoplasmic. The residue at position 658 (Thr658) is a Phosphothreonine. The region spanning 661-960 (FNASSLIGSG…HEMGRLKEYL (300 aa)) is the Protein kinase domain. Residues 667 to 675 (IGSGRFGHV) and Lys689 each bind ATP. Tyr775 is modified (phosphotyrosine). Catalysis depends on Asp788, which acts as the Proton acceptor. At Tyr841 the chain carries Phosphotyrosine.

It belongs to the protein kinase superfamily. Ser/Thr protein kinase family.

The protein resides in the cell membrane. It catalyses the reaction L-seryl-[protein] + ATP = O-phospho-L-seryl-[protein] + ADP + H(+). It carries out the reaction L-threonyl-[protein] + ATP = O-phospho-L-threonyl-[protein] + ADP + H(+). This Arabidopsis thaliana (Mouse-ear cress) protein is Putative leucine-rich repeat receptor-like serine/threonine-protein kinase At2g24130.